The chain runs to 457 residues: Hepatocyte nuclear factor 3-beta (457 aa).

The segment at 14 to 93 (DWSSYYAEPE…AGAMAGMGGS (80 aa)) is transactivation domain 1. The Nuclear localization signal motif lies at 106-113 (LSPSLSPL). Thr156 is subject to Phosphothreonine. Positions 159 to 252 (KPPYSYISLI…FENGCYLRRQ (94 aa)) form a DNA-binding region, fork-head. 2 positions are modified to phosphoserine: Ser212 and Ser283. A compositionally biased stretch (low complexity) spans 280–292 (AQASQAQLGEAAG). Positions 280 to 365 (AQASQAQLGE…PGLPPEAHLK (86 aa)) are disordered. Residues 298–310 (PAGTESPHSSASP) show a composition bias toward polar residues. Thr301 carries the phosphothreonine modification. Residues Ser303, Ser306, Ser307, and Ser309 each carry the phosphoserine modification. Residues 339–352 (PGQQQQAAAHLLGP) are compositionally biased toward low complexity. The tract at residues 361-457 (EAHLKPEHHY…VYSRPIMNSS (97 aa)) is transactivation domain 2. Residues Ser436 and Ser457 each carry the phosphoserine modification.

As to quaternary structure, binds DNA as a monomer. Binds TLE1. Interacts with FOXA1 and FOXA3. Interacts with PRKDC. Interacts with AKT1. Interacts with TET1; this interaction may recruit TET1 to specific genomic loci to mediate their demethylation. Phosphorylation on Thr-156 abolishes binding to target promoters and subsequent transcription activation upon insulin stimulation.

It is found in the nucleus. The protein localises to the cytoplasm. Transcription factor that is involved in embryonic development, establishment of tissue-specific gene expression and regulation of gene expression in differentiated tissues. Is thought to act as a 'pioneer' factor opening the compacted chromatin for other proteins through interactions with nucleosomal core histones and thereby replacing linker histones at target enhancer and/or promoter sites. Binds DNA with the consensus sequence 5'-[AC]A[AT]T[AG]TT[GT][AG][CT]T[CT]-3'. In embryonic development is required for notochord formation. Involved in the development of multiple endoderm-derived organ systems such as the liver, pancreas and lungs; FOXA1 and FOXA2 seem to have at least in part redundant roles. Originally described as a transcription activator for a number of liver genes such as AFP, albumin, tyrosine aminotransferase, PEPCK, etc. Interacts with the cis-acting regulatory regions of these genes. Involved in glucose homeostasis; regulates the expression of genes important for glucose sensing in pancreatic beta-cells and glucose homeostasis. Involved in regulation of fat metabolism. Binds to fibrinogen beta promoter and is involved in IL6-induced fibrinogen beta transcriptional activation. In Homo sapiens (Human), this protein is Hepatocyte nuclear factor 3-beta (FOXA2).